A 213-amino-acid chain; its full sequence is 3-isopropylmalate dehydratase small subunit (213 aa).

This sequence belongs to the LeuD family. LeuD type 1 subfamily. Heterodimer of LeuC and LeuD.

It catalyses the reaction (2R,3S)-3-isopropylmalate = (2S)-2-isopropylmalate. It functions in the pathway amino-acid biosynthesis; L-leucine biosynthesis; L-leucine from 3-methyl-2-oxobutanoate: step 2/4. Its function is as follows. Catalyzes the isomerization between 2-isopropylmalate and 3-isopropylmalate, via the formation of 2-isopropylmaleate. This is 3-isopropylmalate dehydratase small subunit from Neisseria meningitidis serogroup C (strain 053442).